The following is a 128-amino-acid chain: Small ribosomal subunit protein uS12 (128 aa).

The tract at residues 1–25 (MPTIQQLIRRGRKTKASKTASPALE) is disordered. Aspartate 89 carries the post-translational modification 3-methylthioaspartic acid. The interval 101 to 128 (SLDTSGVADRRNSRSKYGAKRPKEAAAK) is disordered.

It belongs to the universal ribosomal protein uS12 family. As to quaternary structure, part of the 30S ribosomal subunit. Contacts proteins S8 and S17. May interact with IF1 in the 30S initiation complex.

In terms of biological role, with S4 and S5 plays an important role in translational accuracy. Its function is as follows. Interacts with and stabilizes bases of the 16S rRNA that are involved in tRNA selection in the A site and with the mRNA backbone. Located at the interface of the 30S and 50S subunits, it traverses the body of the 30S subunit contacting proteins on the other side and probably holding the rRNA structure together. The combined cluster of proteins S8, S12 and S17 appears to hold together the shoulder and platform of the 30S subunit. The chain is Small ribosomal subunit protein uS12 from Chlorobium phaeobacteroides (strain BS1).